The sequence spans 445 residues: Histone acetyltransferase of the MYST family 1 (445 aa).

The 59-residue stretch at 60–118 folds into the Tudor-knot domain; sequence LEVGTRVMCQWRDGKYHPVKVIERRKNYNGGHNDYEYYVHYTEFNRRLDEWIKLEQLDL. The MYST-type HAT domain maps to 169-440; that stretch reads TKVKNIATIE…VDVSKMIWTP (272 aa). The C2HC MYST-type zinc finger occupies 202–227; the sequence is LFFCEFCLSFMKRKEQLQRHMRKCDL. An N6-acetyllysine; by autocatalysis modification is found at lysine 269. Residues 312–314 and 319–325 contribute to the acetyl-CoA site; these read ILT and QRKGYGK. Glutamate 345 serves as the catalytic Proton donor/acceptor. Serine 349 contributes to the acetyl-CoA binding site.

The protein belongs to the MYST (SAS/MOZ) family. As to quaternary structure, interacts with MRG1 and MRG2. Component of the NuA4 histone acetyltransferase complex. In terms of processing, autoacetylation at Lys-269 is required for proper function. Expressed in cotyledons, leaves, stems, roots and, at higher levels in developing flowers, particularly in the anthers and gynoecia. Constitutively expressed in all tissues, predominantly in shoot apical meristem.

It localises to the nucleus. It carries out the reaction L-lysyl-[protein] + acetyl-CoA = N(6)-acetyl-L-lysyl-[protein] + CoA + H(+). Histone acetyltransferase which may be involved in transcriptional activation. Acetylates 'Lys-5' of histone H4 (H4K5ac). Essential for gametophyte development. Involved in DNA repair after UV-B exposure. Negative regulator of flowering controlling the H4K5ac levels in the FLC chromatin. The polypeptide is Histone acetyltransferase of the MYST family 1 (Arabidopsis thaliana (Mouse-ear cress)).